We begin with the raw amino-acid sequence, 170 residues long: Thialysine N-epsilon-acetyltransferase (170 aa).

Residues 4-166 (VMIREAKEGD…FRFEGEAMRE (163 aa)) form the N-acetyltransferase domain. 27-28 (YE) contributes to the substrate binding site. Position 29 is an N6-acetyllysine (lysine 29). Position 92 (glutamate 92) interacts with substrate. Acetyl-CoA is bound by residues 94–96 (IYV), 102–107 (GQGIGS), 133–135 (NKR), and tyrosine 140. Catalysis depends on tyrosine 140, which acts as the Proton donor. Glutamate 152 is a substrate binding site.

The protein belongs to the acetyltransferase family. In terms of assembly, homodimer.

Its subcellular location is the cytoplasm. The catalysed reaction is S-(2-aminoethyl)-L-cysteine + acetyl-CoA = S-(2-acetamidoethyl)-L-cysteine + CoA + H(+). It carries out the reaction an alkane-alpha,omega-diamine + acetyl-CoA = an N-acetylalkane-alpha,omega-diamine + CoA + H(+). Catalyzes the N-acetylation of the amino acid thialysine (S-(2-aminoethyl)-L-cysteine), a L-lysine analog with the 4-methylene group substituted with a sulfur. May also catalyze acetylation of polyamines, such as norspermidine, spermidine or spermine. However, ability to acetylate polyamines is weak, suggesting that it does not act as a diamine acetyltransferase in vivo. The polypeptide is Thialysine N-epsilon-acetyltransferase (Bos taurus (Bovine)).